Reading from the N-terminus, the 377-residue chain is MEEPEEPADSGQSLVPVYIYSPEYVSMCDSLAKIPKRASMVHSLIEAYALHKQMRIVKPKVASMEEMATFHTDAYLQHLQKVSQEGDDDHPDSIEYGLGYDCPATEGIFDYAAAIGGATITAAQCLIDGMCKVAINWSGGWHHAKKDEASGFCYLNDAVLGILRLRRKFERILYVDLDLHHGDGVEDAFSFTSKVMTVSLHKFSPGFFPGTGDVSDVGLGKGRYYSVNVPIQDGIQDEKYYQICESVLKEVYQAFNPKAVVLQLGADTIAGDPMCSFNMTPVGIGKCLKYILQWQLATLILGGGGYNLANTARCWTYLTGVILGKTLSSEIPDHEFFTAYGPDYVLEITPSCRPDRNEPHRIQQILNYIKGNLKHVV.

The tract at residues 14–324 is histone deacetylase; the sequence is LVPVYIYSPE…WTYLTGVILG (311 aa). S39 carries the post-translational modification Phosphoserine. D101 is a substrate binding site. The active-site Proton acceptor is the H143. G151 lines the substrate pocket. A divalent metal cation-binding residues include D178, H180, and D267. A substrate-binding site is contributed by Y306.

It belongs to the histone deacetylase family. HD type 1 subfamily. As to quaternary structure, interacts with PEPB2-MYH11, a fusion protein consisting of the 165 N-terminal residues of CBF-beta (PEPB2) with the tail region of MYH11 produced by the inversion Inv(16)(p13q22), a translocation associated with acute myeloid leukemia of M4EO subtype. The PEPB2-MYH1 fusion protein also interacts with RUNX1, a well known transcriptional regulator, suggesting that the interaction with HDAC8 may participate in the conversion of RUNX1 into a constitutive transcriptional repressor. Interacts with CBFA2T3. Interacts with phosphorylated SMG5/EST1B; this interaction protects SMG5 from ubiquitin-mediated degradation. Associates with alpha-SMA (smooth muscle alpha-actin). It depends on a divalent metal cation as a cofactor. In terms of processing, phosphorylated by PKA on serine 39. Phosphorylation reduces deacetylase activity observed preferentially on histones H3 and H4. Weakly expressed in most tissues. Expressed at higher level in heart, brain, kidney and pancreas and also in liver, lung, placenta, prostate and kidney.

Its subcellular location is the nucleus. The protein localises to the chromosome. It is found in the cytoplasm. It catalyses the reaction N(6)-acetyl-L-lysyl-[histone] + H2O = L-lysyl-[histone] + acetate. It carries out the reaction N(6)-acetyl-L-lysyl-[protein] + H2O = L-lysyl-[protein] + acetate. The enzyme catalyses N(6)-(2E)-butenoyl-L-lysyl-[protein] + H2O = (2E)-2-butenoate + L-lysyl-[protein]. With respect to regulation, its activity is inhibited by trichostatin A (TSA), suberoylanilide hydroxamic acid (SAHA), 3-(1-methyl-4-phenylacetyl-1H-2-pyrrolyl)-N-hydroxy-2-propenamide (APHA), 4-dimethylamino-N-(6-hydroxycarbamoyethyl)benzamide-N-hydroxy-7-(4-dimethylaminobenzoyl)aminoheptanamide (MS-344), 5-(4-methyl-benzoylamino)-biphenyl-3,4'-dicarboxylic acid 3-dimethylamide 4'-hydroxyamide (CRA-A) and butyrate. Histone deacetylase that catalyzes the deacetylation of lysine residues on the N-terminal part of the core histones (H2A, H2B, H3 and H4). Histone deacetylation gives a tag for epigenetic repression and plays an important role in transcriptional regulation, cell cycle progression and developmental events. Histone deacetylases act via the formation of large multiprotein complexes. Also involved in the deacetylation of cohesin complex protein SMC3 regulating release of cohesin complexes from chromatin. May play a role in smooth muscle cell contractility. In addition to protein deacetylase activity, also has protein-lysine deacylase activity: acts as a protein decrotonylase by mediating decrotonylation ((2E)-butenoyl) of histones. The sequence is that of Histone deacetylase 8 from Homo sapiens (Human).